Reading from the N-terminus, the 156-residue chain is Arginine repressor (156 aa).

Belongs to the ArgR family.

The protein resides in the cytoplasm. The protein operates within amino-acid biosynthesis; L-arginine biosynthesis [regulation]. Its function is as follows. Regulates arginine biosynthesis genes. This is Arginine repressor from Tolumonas auensis (strain DSM 9187 / NBRC 110442 / TA 4).